The sequence spans 461 residues: Steroidogenic factor 1 (461 aa).

A DNA-binding region (nuclear receptor) is located at residues 10–85 (DELCPVCGDK…VGMRLEAVRA (76 aa)). The NR C4-type zinc finger occupies 13 to 33 (CPVCGDKVSGYHYGLLTCESC). An N6-acetyllysine mark is found at Lys-34, Lys-38, and Lys-72. An NR C4-type zinc finger spans residues 49-73 (CTESQSCKIDKTQRKRCPFCRFQKC). Residue Lys-119 forms a Glycyl lysine isopeptide (Lys-Gly) (interchain with G-Cter in SUMO) linkage. The segment at 119 to 150 (KLETGPPMGVAPPPPPPPDYMLPPGLHAPEPK) is disordered. The segment covering 127-139 (GVAPPPPPPPDYM) has biased composition (pro residues). Residue Lys-194 forms a Glycyl lysine isopeptide (Lys-Gly) (interchain with G-Cter in SUMO) linkage. Residue Ser-203 is modified to Phosphoserine; by CDK7. The region spanning 222-459 (GVPELIVQLL…NLLIEMLQAK (238 aa)) is the NR LBD domain. The segment at 230–461 (LLQLEPDEDQ…LIEMLQAKQT (232 aa)) is important for dimerization. Positions 341, 436, and 440 each coordinate a 1,2-diacyl-sn-glycero-3-phosphocholine.

The protein belongs to the nuclear hormone receptor family. NR5 subfamily. Binds DNA as a monomer. Part of a complex consisting of SFPQ, NONO and NR5A1. Interacts with NR0B2, NCOA2 and PPARGC1A. Interacts with DGKQ and CDK7. Binds to and activated by HIPK3. Post-translationally, acetylation stimulates the transcriptional activity. In terms of processing, sumoylation reduces CDK7-mediated phosphorylation on Ser-203. Phosphorylated on Ser-203 by CDK7. This phosphorylation promotes transcriptional activity.

The protein localises to the nucleus. Functionally, transcriptional activator. Seems to be essential for sexual differentiation and formation of the primary steroidogenic tissues. Binds to the Ad4 site found in the promoter region of steroidogenic P450 genes such as CYP11A, CYP11B and CYP21B. Also regulates the AMH/Muellerian inhibiting substance gene as well as the AHCH and STAR genes. 5'-YCAAGGYC-3' and 5'-RRAGGTCA-3' are the consensus sequences for the recognition by NR5A1. The SFPQ-NONO-NR5A1 complex binds to the CYP17 promoter and regulates basal and cAMP-dependent transcriptional activity. Binds phosphatidylcholine and phospholipids with a phosphatidylinositol (PI) headgroup, in particular PI(3,4)P2 and PI(3,4,5)P3. Activated by the phosphorylation of NR5A1 by HIPK3 leading to increased steroidogenic gene expression upon cAMP signaling pathway stimulation. This Sus scrofa (Pig) protein is Steroidogenic factor 1 (NR5A1).